A 98-amino-acid polypeptide reads, in one-letter code: Large ribosomal subunit protein bL25 (98 aa).

Residues 1-22 (MANFVLNATARNEDKQGKGASR) are disordered.

It belongs to the bacterial ribosomal protein bL25 family. In terms of assembly, part of the 50S ribosomal subunit; part of the 5S rRNA/L5/L18/L25 subcomplex. Contacts the 5S rRNA. Binds to the 5S rRNA independently of L5 and L18.

Functionally, this is one of the proteins that binds to the 5S RNA in the ribosome where it forms part of the central protuberance. This Acinetobacter baylyi (strain ATCC 33305 / BD413 / ADP1) protein is Large ribosomal subunit protein bL25.